A 142-amino-acid polypeptide reads, in one-letter code: Peptide methionine sulfoxide reductase MsrB (142 aa).

Positions 3 to 126 (KEKLKKKLSL…NSAALRFVPF (124 aa)) constitute a MsrB domain. Cys115 (nucleophile) is an active-site residue.

This sequence belongs to the MsrB Met sulfoxide reductase family.

The catalysed reaction is L-methionyl-[protein] + [thioredoxin]-disulfide + H2O = L-methionyl-(R)-S-oxide-[protein] + [thioredoxin]-dithiol. This Lactococcus lactis subsp. lactis (strain IL1403) (Streptococcus lactis) protein is Peptide methionine sulfoxide reductase MsrB.